The following is an 89-amino-acid chain: Cytochrome c oxidase subunit 7A, mitochondrial (89 aa).

The N-terminal 31 residues, Met-1–Gly-31, are a transit peptide targeting the mitochondrion. The Mitochondrial matrix segment spans residues Tyr-32 to Asp-58. A helical membrane pass occupies residues Asn-59–Tyr-81. Residues Glu-82 to Glu-89 lie on the Mitochondrial intermembrane side of the membrane.

This sequence belongs to the cytochrome c oxidase VIIa family. As to quaternary structure, component of the cytochrome c oxidase (complex IV, CIV), a multisubunit enzyme composed of a catalytic core of 3 subunits and several supernumerary subunits. The complex exists as a monomer or a dimer and forms supercomplexes (SCs) in the inner mitochondrial membrane with ubiquinol-cytochrome c oxidoreductase (cytochrome b-c1 complex, complex III, CIII).

It localises to the mitochondrion inner membrane. It functions in the pathway energy metabolism; oxidative phosphorylation. Functionally, component of the cytochrome c oxidase, the last enzyme in the mitochondrial electron transport chain which drives oxidative phosphorylation. The respiratory chain contains 3 multisubunit complexes succinate dehydrogenase (complex II, CII), ubiquinol-cytochrome c oxidoreductase (cytochrome b-c1 complex, complex III, CIII) and cytochrome c oxidase (complex IV, CIV), that cooperate to transfer electrons derived from NADH and succinate to molecular oxygen, creating an electrochemical gradient over the inner membrane that drives transmembrane transport and the ATP synthase. Cytochrome c oxidase is the component of the respiratory chain that catalyzes the reduction of oxygen to water. Electrons originating from reduced cytochrome c in the intermembrane space (IMS) are transferred via the dinuclear copper A center (CU(A)) of subunit 2 and heme A of subunit 1 to the active site in subunit 1, a binuclear center (BNC) formed by heme A3 and copper B (CU(B)). The BNC reduces molecular oxygen to 2 water molecules using 4 electrons from cytochrome c in the IMS and 4 protons from the mitochondrial matrix. The chain is Cytochrome c oxidase subunit 7A, mitochondrial from Drosophila melanogaster (Fruit fly).